The primary structure comprises 409 residues: Translation initiation factor 2 subunit gamma (409 aa).

In terms of domain architecture, tr-type G spans Gln7–Asp203. The tract at residues Gly16–Thr23 is G1. Residues Asp19, Thr23, Gly44, and Ser46 each coordinate Mg(2+). Asp19–Thr24 contributes to the GTP binding site. The tract at residues Gly44–Arg48 is G2. Residues Asp90–Gly93 are G3. GTP is bound by residues Asn146 to Asp149 and Ser181 to Gln183. Positions Asn146–Asp149 are G4. Positions Ser181–Gln183 are G5.

This sequence belongs to the TRAFAC class translation factor GTPase superfamily. Classic translation factor GTPase family. EIF2G subfamily. In terms of assembly, heterotrimer composed of an alpha, a beta and a gamma chain. Requires Mg(2+) as cofactor.

The catalysed reaction is GTP + H2O = GDP + phosphate + H(+). Its function is as follows. eIF-2 functions in the early steps of protein synthesis by forming a ternary complex with GTP and initiator tRNA. This is Translation initiation factor 2 subunit gamma from Natronomonas pharaonis (strain ATCC 35678 / DSM 2160 / CIP 103997 / JCM 8858 / NBRC 14720 / NCIMB 2260 / Gabara) (Halobacterium pharaonis).